A 186-amino-acid chain; its full sequence is ADP-ribosylation factor-like protein 8A (186 aa).

The segment at residues 1 to 19 (MIALFNKLLDWFKALFWKE) is an intramembrane region (note=Mediates targeting to membranes). Residues 29–35 (QYSGKTT), 71–75 (DIGGQ), and 130–133 (NKRD) contribute to the GTP site.

It belongs to the small GTPase superfamily. Arf family. As to quaternary structure, interacts with PLEKHM1. When GTP-bound, interacts with RUFY3 and RUFY4, but not with RUFY1, nor RUFY2.

It localises to the late endosome membrane. Its subcellular location is the lysosome membrane. It is found in the cytoplasm. The protein resides in the cytoskeleton. The protein localises to the spindle. It localises to the cell projection. Its subcellular location is the axon. It is found in the synapse. Its function is as follows. Plays a role in lysosomes motility. In neurons, mediates the anterograde axonal long-range transport of presynaptic lysosome-related vesicles required for presynaptic biogenesis and synaptic function. May play a role in chromosome segregation. This Mus musculus (Mouse) protein is ADP-ribosylation factor-like protein 8A (Arl8a).